Reading from the N-terminus, the 349-residue chain is Cbb3-type cytochrome c oxidase subunit CcoP (349 aa).

The tract at residues 1–67 is disordered; that stretch reads MADTDDEHAS…RVVRDRKGGR (67 aa). At 1–96 the chain is on the cytoplasmic side; it reads MADTDDEHAS…NPLPRWWLWT (96 aa). Over residues 16–30 the composition is skewed to basic and acidic residues; it reads NRIELERQAADEAHK. Residues 97-117 form a helical membrane-spanning segment; it reads FYATIVWGVLYLIAYPAIPLV. Topologically, residues 118-349 are periplasmic; the sequence is NGATQGLLGQ…AYVHSLGGGE (232 aa). Cytochrome c domains lie at 168-258 and 265-346; these read YTAN…LELG and ALAA…HSLG. Heme c is bound by residues Cys181, Cys184, His185, Met233, Cys278, Cys281, His282, and Met323.

The protein belongs to the CcoP / FixP family. As to quaternary structure, component of the cbb3-type cytochrome c oxidase at least composed of CcoN, CcoO, CcoQ and CcoP. Heme c serves as cofactor.

It localises to the cell inner membrane. The protein operates within energy metabolism; oxidative phosphorylation. C-type cytochrome. Part of the cbb3-type cytochrome c oxidase complex. CcoP subunit is required for transferring electrons from donor cytochrome c via its heme groups to CcoO subunit. From there, electrons are shuttled to the catalytic binuclear center of CcoN subunit where oxygen reduction takes place. The complex also functions as a proton pump. This is Cbb3-type cytochrome c oxidase subunit CcoP from Paracoccus denitrificans (strain Pd 1222).